The primary structure comprises 368 residues: tRNA-specific 2-thiouridylase MnmA (368 aa).

ATP-binding positions include 6 to 13 and M32; that span reads ALSGGVDS. C92 acts as the Nucleophile in catalysis. Cysteines 92 and 186 form a disulfide. G116 is an ATP binding site. Residues 134-136 form an interaction with tRNA region; the sequence is KDQ. Catalysis depends on C186, which acts as the Cysteine persulfide intermediate. The interval 292–293 is interaction with tRNA; sequence RY.

Belongs to the MnmA/TRMU family.

The protein localises to the cytoplasm. The enzyme catalyses S-sulfanyl-L-cysteinyl-[protein] + uridine(34) in tRNA + AH2 + ATP = 2-thiouridine(34) in tRNA + L-cysteinyl-[protein] + A + AMP + diphosphate + H(+). Functionally, catalyzes the 2-thiolation of uridine at the wobble position (U34) of tRNA, leading to the formation of s(2)U34. The polypeptide is tRNA-specific 2-thiouridylase MnmA (Campylobacter hominis (strain ATCC BAA-381 / DSM 21671 / CCUG 45161 / LMG 19568 / NCTC 13146 / CH001A)).